The primary structure comprises 80 residues: Metallothionein-like protein type 2, MT2-4/MT2-25 (80 aa).

The protein belongs to the metallothionein superfamily. Type 15 family.

Its function is as follows. Metallothioneins have a high content of cysteine residues that bind various heavy metals. This Brassica juncea (Indian mustard) protein is Metallothionein-like protein type 2, MT2-4/MT2-25.